A 104-amino-acid polypeptide reads, in one-letter code: Large ribosomal subunit protein bL21 (104 aa).

Belongs to the bacterial ribosomal protein bL21 family. As to quaternary structure, part of the 50S ribosomal subunit. Contacts protein L20.

In terms of biological role, this protein binds to 23S rRNA in the presence of protein L20. This is Large ribosomal subunit protein bL21 from Granulibacter bethesdensis (strain ATCC BAA-1260 / CGDNIH1).